The chain runs to 325 residues: Tetraacyldisaccharide 4'-kinase (325 aa).

Residue 55–62 (TAGGNGKT) participates in ATP binding.

This sequence belongs to the LpxK family.

The catalysed reaction is a lipid A disaccharide + ATP = a lipid IVA + ADP + H(+). It functions in the pathway glycolipid biosynthesis; lipid IV(A) biosynthesis; lipid IV(A) from (3R)-3-hydroxytetradecanoyl-[acyl-carrier-protein] and UDP-N-acetyl-alpha-D-glucosamine: step 6/6. Functionally, transfers the gamma-phosphate of ATP to the 4'-position of a tetraacyldisaccharide 1-phosphate intermediate (termed DS-1-P) to form tetraacyldisaccharide 1,4'-bis-phosphate (lipid IVA). The polypeptide is Tetraacyldisaccharide 4'-kinase (Citrobacter koseri (strain ATCC BAA-895 / CDC 4225-83 / SGSC4696)).